The chain runs to 620 residues: Chaperone protein HtpG (620 aa).

An a; substrate-binding region spans residues Met1–Arg339. The tract at residues Glu340–Ala546 is b. Residues Met547–Leu620 form a c region.

Belongs to the heat shock protein 90 family. In terms of assembly, homodimer.

The protein resides in the cytoplasm. In terms of biological role, molecular chaperone. Has ATPase activity. The protein is Chaperone protein HtpG of Sulfurovum sp. (strain NBC37-1).